A 110-amino-acid polypeptide reads, in one-letter code: Large ribosomal subunit protein uL22 (110 aa).

It belongs to the universal ribosomal protein uL22 family. In terms of assembly, part of the 50S ribosomal subunit.

In terms of biological role, this protein binds specifically to 23S rRNA; its binding is stimulated by other ribosomal proteins, e.g. L4, L17, and L20. It is important during the early stages of 50S assembly. It makes multiple contacts with different domains of the 23S rRNA in the assembled 50S subunit and ribosome. Functionally, the globular domain of the protein is located near the polypeptide exit tunnel on the outside of the subunit, while an extended beta-hairpin is found that lines the wall of the exit tunnel in the center of the 70S ribosome. The polypeptide is Large ribosomal subunit protein uL22 (Baumannia cicadellinicola subsp. Homalodisca coagulata).